We begin with the raw amino-acid sequence, 712 residues long: MMMTVKQESPNSTLNTSEFSSDENLKTNNSEPPKKVSKSSTGKRKYHQKSRNGCSTCKKRRVKCDEQRPVCGNCTKLKLDCGYLHEPLENILNTKKDIANNEPPSKKRKRKVSTVSAASDSESTTQQATPSLTPSPNHSQDIKTQPVIPPTNPLSALSSGLLSAGNLNNLNVAHLVNNLSGLGDLSNLASLGNLASLSNLASLAQLPIDLSNLGSLLDSPAASNIAASFLGSAAATTVPPTTNSEFKESNQRKSQTQMPPQPTVPITSMGAATTTSSHQQANMPSRSKPQPETLQSSIPATTSGSPGMSYPGCPSNSDPFGRSSDKSLPNISPNMSIPANPLSDPLTQGMRSNLNMLDLKLMFHYTSVVANTITGAGISDTNIWNCDIPKLAFEHPFLMHSILAFSATHLSRTEKGLDQCVTCHRGDALRLLREAVLNINADNTDALVASALILIMDSLANASFPSSTSPKSLPASAWIFHVKGAATILTAVWPLTEASRFYKFISVDLGDLGDIINQGVNMNKSKGIDRENSAYYTDLECHDADIADLFPVLLDSPYLITLAYLNKLHKERYKSDFILRIFAFPALLDKQFMGLLMSGDVKAMRIMRSYYKLLRSFTTEMKDKVWFLEGVSQVLPVNVEEYAGGAGGMHMMMDFLGGGPAIVDDNEIDAEITKFDPSGTLTNKLIDTDNLPSVLTSNLDLMQGDNGFMNMK.

Residues 1–19 (MMMTVKQESPNSTLNTSEF) are compositionally biased toward polar residues. The segment at 1–52 (MMMTVKQESPNSTLNTSEFSSDENLKTNNSEPPKKVSKSSTGKRKYHQKSRN) is disordered. Over residues 35-50 (KVSKSSTGKRKYHQKS) the composition is skewed to basic residues. Positions 54 to 81 (CSTCKKRRVKCDEQRPVCGNCTKLKLDC) form a DNA-binding region, zn(2)-C6 fungal-type. Disordered regions lie at residues 95-150 (KKDI…VIPP) and 236-342 (TTVP…ANPL). Composition is skewed to polar residues over residues 113 to 143 (STVSAASDSESTTQQATPSLTPSPNHSQDIK), 252 to 306 (RKSQ…SGSP), and 326 to 337 (KSLPNISPNMSI).

Its subcellular location is the nucleus. Its function is as follows. Transcription factor involved in the regulation of ergosterol biosynthetic genes such as ERG2 and ERG11 through direct binding to sterol response elements (SREs) in the promoters. Also binds to its own promoter on 2 cis-acting elements to promote autoregulation. Regulates sterol uptake across the plasma membrane. Acts as a major regulator of ascorbic acid-induced response. Plays a role in the triggering of pyroptosis, an inflammasome-mediated programmed cell death pathway in macrophages, allowing macrophages escaping. The polypeptide is Sterol uptake control protein 2 (Candida albicans (strain SC5314 / ATCC MYA-2876) (Yeast)).